The following is a 565-amino-acid chain: Sialate:O-sulfotransferase 2 (565 aa).

Residues 1–18 lie on the Cytoplasmic side of the membrane; sequence MAKLWFKFQRYFRRKPVR. A helical; Signal-anchor for type II membrane protein membrane pass occupies residues 19–41; that stretch reads FFTFLALYLTAGSLVFLHSGFVG. At 42–565 the chain is on the extracellular side; it reads QPAVSGNQAN…TGVPDDYYPR (524 aa). WSC domains are found at residues 127–219 and 230–324; these read RAKY…YRLQ and SAVF…YQTQ. Asn189 and Asn242 each carry an N-linked (GlcNAc...) asparagine glycan.

This sequence belongs to the WSCD family.

The protein localises to the golgi apparatus membrane. Functionally, sialate:O-sulfotransferase which catalyzes 8-O-sulfation at the Sia-glycan level using 3'-phosphoadenosine 5'-phosphosulfate (PAPS) as a donor, forming 8-O-sulfated Sia (Sia8S)-glycans. Displays selectivity toward glycoproteins such as TF/transferrin. The protein is Sialate:O-sulfotransferase 2 (WSCD2) of Homo sapiens (Human).